A 212-amino-acid polypeptide reads, in one-letter code: Molybdenum cofactor guanylyltransferase (212 aa).

GTP-binding positions include 14–16, lysine 27, asparagine 55, aspartate 73, and aspartate 108; that span reads LAG. Aspartate 108 provides a ligand contact to Mg(2+).

Belongs to the MobA family. In terms of assembly, monomer. Mg(2+) serves as cofactor.

Its subcellular location is the cytoplasm. The catalysed reaction is Mo-molybdopterin + GTP + H(+) = Mo-molybdopterin guanine dinucleotide + diphosphate. Functionally, transfers a GMP moiety from GTP to Mo-molybdopterin (Mo-MPT) cofactor (Moco or molybdenum cofactor) to form Mo-molybdopterin guanine dinucleotide (Mo-MGD) cofactor. This chain is Molybdenum cofactor guanylyltransferase, found in Bradyrhizobium sp. (strain ORS 278).